We begin with the raw amino-acid sequence, 151 residues long: Non-specific lipid transfer protein GPI-anchored 30 (151 aa).

The first 22 residues, 1-22 (MMMGMKFFSFYVVLLLVAASSG), serve as a signal peptide directing secretion. 4 disulfide bridges follow: cysteine 32–cysteine 69, cysteine 39–cysteine 53, cysteine 54–cysteine 97, and cysteine 67–cysteine 106. N-linked (GlcNAc...) asparagine glycosylation is present at asparagine 44. Residue serine 120 is the site of GPI-anchor amidated serine attachment. The propeptide at 121-151 (SSIGNTFSQSYWMTTLAIAATVLSYCHHIIS) is removed in mature form.

The protein belongs to the plant LTP family. As to expression, expressed in vascular tissues of all organs. Expressed in seedlings, preferentially in hypocotyls and roots. Also observed in siliques.

It is found in the cell membrane. In terms of biological role, lipid transfer protein that promotes the number of phloem (pro)cambial and pericycle cells. The protein is Non-specific lipid transfer protein GPI-anchored 30 of Arabidopsis thaliana (Mouse-ear cress).